The sequence spans 357 residues: Peptide chain release factor 1 (357 aa).

Residue Gln234 is modified to N5-methylglutamine. The disordered stretch occupies residues 282–313; the sequence is DSKKQEQRSNNRKQQVGSGDRSERIRTYNFPQ.

Belongs to the prokaryotic/mitochondrial release factor family. Post-translationally, methylated by PrmC. Methylation increases the termination efficiency of RF1.

The protein resides in the cytoplasm. Peptide chain release factor 1 directs the termination of translation in response to the peptide chain termination codons UAG and UAA. The sequence is that of Peptide chain release factor 1 from Borreliella afzelii (strain PKo) (Borrelia afzelii).